The sequence spans 163 residues: Nucleotide-binding protein Cla_1551 (163 aa).

It belongs to the YajQ family.

Functionally, nucleotide-binding protein. This is Nucleotide-binding protein Cla_1551 from Campylobacter lari (strain RM2100 / D67 / ATCC BAA-1060).